Here is a 239-residue protein sequence, read N- to C-terminus: Cysteine-rich venom protein natrin-1 (239 aa).

Positions 1-18 are cleaved as a signal peptide; the sequence is MIAFSLLCFAAVLQQSFG. Positions 37 to 165 constitute an SCP domain; sequence VDLHNSLRRR…AWSYFYVCQY (129 aa). 8 cysteine pairs are disulfide-bonded: C74–C152, C91–C166, C147–C163, C185–C192, C188–C197, C201–C234, C210–C228, and C219–C232. The region spanning 201 to 234 is the ShKT domain; sequence CTIYNKLTNCDSLLKQSSCQDDWIKSNCPASCFC.

Expressed by the venom gland.

Its subcellular location is the secreted. Inhibits calcium-activated potassium channels (KCa1.1/KCNMA1), voltage-gated potassium channel Kv1.3/KCNA3, and the calcium release channel/ryanodine receptor (RyR). Binds specifically to type 1 RyR (RyR1) from skeletal muscle. Inhibit both the binding of ryanodine to RyR1, and RyR1's calcium-channel activity. Inhibits carbachol-induced muscle contraction and weakly blocks muscle contraction evoked by potassium. In Naja atra (Chinese cobra), this protein is Cysteine-rich venom protein natrin-1.